A 318-amino-acid polypeptide reads, in one-letter code: MKHLLSMADLSADEITGLLDEAQNFKEALEGRELKKLPTLRGRTIFTVFYENSTRTRSSFETAGKWMSADVINISASSSSVKKGESLQDTGLTLTAIGADALIIRHPSSGAAQQLAHWVAPNGDGPSVINAGDGAHQHPTQALLDALTLRQRLGGINGRKIVIVGDILHSRVARSNAELLTKLGAEVVYVAPPTLLPYGVETWPVRISYDMDSELADADAIMMLRVQAERMAGGFFPSHREYATLYGMSTAREAKMKDKAIIMHPGPMLRGMEINYSVADAPRTAVLQQVNNGVHVRMAVLFSLIIGTHGQSHTTKES.

Carbamoyl phosphate contacts are provided by Arg55 and Thr56. Residue Lys83 coordinates L-aspartate. 3 residues coordinate carbamoyl phosphate: Arg105, His138, and Gln141. Arg171 and Arg225 together coordinate L-aspartate. Carbamoyl phosphate contacts are provided by Gly266 and Pro267.

Belongs to the aspartate/ornithine carbamoyltransferase superfamily. ATCase family. Heterododecamer (2C3:3R2) of six catalytic PyrB chains organized as two trimers (C3), and six regulatory PyrI chains organized as three dimers (R2).

It catalyses the reaction carbamoyl phosphate + L-aspartate = N-carbamoyl-L-aspartate + phosphate + H(+). It participates in pyrimidine metabolism; UMP biosynthesis via de novo pathway; (S)-dihydroorotate from bicarbonate: step 2/3. Functionally, catalyzes the condensation of carbamoyl phosphate and aspartate to form carbamoyl aspartate and inorganic phosphate, the committed step in the de novo pyrimidine nucleotide biosynthesis pathway. In Corynebacterium kroppenstedtii (strain DSM 44385 / JCM 11950 / CIP 105744 / CCUG 35717), this protein is Aspartate carbamoyltransferase catalytic subunit.